The sequence spans 209 residues: 3-demethoxyubiquinol 3-hydroxylase (209 aa).

Residues Glu58, Glu88, His91, Glu140, Glu172, and His175 each coordinate Fe cation.

Belongs to the COQ7 family. It depends on Fe cation as a cofactor.

It localises to the cell membrane. The catalysed reaction is a 5-methoxy-2-methyl-3-(all-trans-polyprenyl)benzene-1,4-diol + AH2 + O2 = a 3-demethylubiquinol + A + H2O. Its pathway is cofactor biosynthesis; ubiquinone biosynthesis. Its function is as follows. Catalyzes the hydroxylation of 2-nonaprenyl-3-methyl-6-methoxy-1,4-benzoquinol during ubiquinone biosynthesis. The polypeptide is 3-demethoxyubiquinol 3-hydroxylase (Polynucleobacter necessarius subsp. necessarius (strain STIR1)).